A 672-amino-acid polypeptide reads, in one-letter code: Probable copper-transporting P-type ATPase B (672 aa).

Over residues 1–17 the composition is skewed to basic and acidic residues; the sequence is MEHHSHQEHENHTSHGN. A disordered region spans residues 1–22; it reads MEHHSHQEHENHTSHGNHEHHH. The next 6 membrane-spanning stretches (helical) occupy residues 30–50, 55–75, 93–113, 125–145, 282–302, and 313–333; these read FFIS…MGVK, ISFT…FFYG, GMMT…LYAF, TMDF…GHWI, GYLF…WMLI, and LVTV…PLVT. D365 functions as the 4-aspartylphosphate intermediate in the catalytic mechanism. Positions 563 and 567 each coordinate Mg(2+). The next 2 membrane-spanning stretches (helical) occupy residues 621–643 and 647–669; these read LWWG…ASIG and SPAV…AFTL.

It belongs to the cation transport ATPase (P-type) (TC 3.A.3) family. Type IB subfamily.

The protein resides in the cell membrane. The catalysed reaction is Cu(+)(in) + ATP + H2O = Cu(+)(out) + ADP + phosphate + H(+). In terms of biological role, involved in copper transport. The chain is Probable copper-transporting P-type ATPase B (copB) from Staphylococcus aureus.